The chain runs to 314 residues: Bifunctional pinoresinol-lariciresinol reductase (314 aa).

NADP(+) is bound by residues 10 to 16, arginine 35, and lysine 44; that span reads GGTGYIG. Lysine 138 functions as the Proton acceptor in the catalytic mechanism. NADP(+) is bound at residue arginine 142. Histidine 270 is a binding site for substrate.

Belongs to the NmrA-type oxidoreductase family. Isoflavone reductase subfamily. In terms of assembly, dimer.

The catalysed reaction is (+)-lariciresinol + NADP(+) = (+)-pinoresinol + NADPH + H(+). It catalyses the reaction (+)-secoisolariciresinol + NADP(+) = (-)-lariciresinol + NADPH + H(+). Its function is as follows. Reductase involved in the lignan justicidin B biosynthesis. Catalyzes the enantioselective conversion of (+)-pinoresinol into (+)-lariciresinol and of (-)-lariciresinol into (+)-secoisolariciresinol. Low activity with the other enantiomers. Abstracts the 4R-hydride from the NADPH cofactor during catalysis. This chain is Bifunctional pinoresinol-lariciresinol reductase (PLR_Lp1), found in Linum perenne (Perennial flax).